The following is a 197-amino-acid chain: Transcription factor FapR (197 aa).

Belongs to the FapR family.

Functionally, transcriptional factor involved in regulation of membrane lipid biosynthesis by repressing genes involved in fatty acid and phospholipid metabolism. This is Transcription factor FapR from Bacillus cereus (strain 03BB102).